We begin with the raw amino-acid sequence, 181 residues long: Protein Abitram (181 aa).

This sequence belongs to the ABITRAM family. In terms of assembly, interacts with F-actin. Interacts with G-actin.

The protein resides in the nucleus speckle. Its subcellular location is the cell projection. The protein localises to the lamellipodium. It is found in the nucleus. It localises to the growth cone. The protein resides in the dendrite. Functionally, actin-binding protein that regulates actin polymerization, filopodia dynamics and increases the branching of proximal dendrites of developing neurons. The sequence is that of Protein Abitram from Homo sapiens (Human).